Here is a 36-residue protein sequence, read N- to C-terminus: Delta-amaurobitoxin-Pl1c (36 aa).

Intrachain disulfides connect Cys-3–Cys-19, Cys-10–Cys-24, Cys-18–Cys-34, and Cys-26–Cys-32.

In terms of tissue distribution, expressed by the venom gland.

The protein localises to the secreted. In terms of biological role, binds at site 4 of sodium channels (Nav) and inhibits the fast inactivation of cockroach channels. This toxin is active only on insects. Has a potent activity against S.litura larvae. The chain is Delta-amaurobitoxin-Pl1c from Pireneitega luctuosa (Tangled nest spider).